The chain runs to 289 residues: UPF0173 metal-dependent hydrolase H16_A2129 (289 aa).

It belongs to the UPF0173 family.

In Cupriavidus necator (strain ATCC 17699 / DSM 428 / KCTC 22496 / NCIMB 10442 / H16 / Stanier 337) (Ralstonia eutropha), this protein is UPF0173 metal-dependent hydrolase H16_A2129.